Consider the following 1435-residue polypeptide: Gag-Pol polyprotein (1435 aa).

The N-myristoyl glycine; by host moiety is linked to residue glycine 2. The interaction with Gp41 stretch occupies residues 7–31 (VLSAGELDKWEKIRLRPGGKKQYRL). The segment at 8–43 (LSAGELDKWEKIRLRPGGKKQYRLKHIVWASRELER) is interaction with host CALM1. The interaction with host AP3D1 stretch occupies residues 12–19 (ELDKWEKI). The interval 14–33 (DKWEKIRLRPGGKKQYRLKH) is interaction with membrane phosphatidylinositol 4,5-bisphosphate and RNA. The Nuclear export signal motif lies at 16 to 22 (WEKIRLR). A Nuclear localization signal motif is present at residues 26–32 (KKQYRLK). Residues 73 to 77 (EELRS) are interaction with membrane phosphatidylinositol 4,5-bisphosphate. The tract at residues 106-128 (EEQNKSKKKAQQAAADTGNSSQV) is disordered. Tyrosine 132 is subject to Phosphotyrosine; by host. Positions 189 to 227 (NTVGGHQAAMQMLKETINEEAAEWDRLHPVHAGPIAPGQ) are interaction with human PPIA/CYPA and NUP153. Positions 277-363 (YSPTSILDIR…GGPGHKARVL (87 aa)) are dimerization/Multimerization of capsid protein p24. 2 consecutive CCHC-type zinc fingers follow at residues 390–407 (VKCF…NCRA) and 411–428 (KGCW…DCTE). The interval 489 to 493 (PQITL) is dimerization of protease. The Peptidase A2 domain maps to 508–577 (KEALLDTGAD…TPVNIIGRNL (70 aa)). Residue aspartate 513 is the For protease activity; shared with dimeric partner of the active site. Dimerization of protease regions lie at residues 537–543 (GIGGFIK) and 576–588 (NLLT…LNFP). The Reverse transcriptase domain occupies 631–821 (EGKISKIGPE…PPFLWMGYEL (191 aa)). Aspartate 697, aspartate 772, and aspartate 773 together coordinate Mg(2+). Positions 814-822 (FLWMGYELH) are RT 'primer grip'. The short motif at 985 to 1001 (WETWWTEYWQATWIPEW) is the Tryptophan repeat motif element. Positions 1021 to 1144 (IIGAETFYVD…VDKLVSAGIR (124 aa)) constitute an RNase H type-1 domain. Residues aspartate 1030, glutamate 1065, aspartate 1085, and aspartate 1136 each contribute to the Mg(2+) site. The segment at 1150–1191 (DGIDKAQEEHEKYHSNWRAMASDFNLPPVVAKEIVASCDKCQ) adopts an Integrase-type zinc-finger fold. 4 residues coordinate Zn(2+): histidine 1159, histidine 1163, cysteine 1187, and cysteine 1190. One can recognise an Integrase catalytic domain in the interval 1201 to 1351 (VDCSPGIWQL…SAGERIVDII (151 aa)). Residues aspartate 1211, aspartate 1263, and glutamate 1299 each contribute to the Mg(2+) site. Positions 1370–1417 (FRVYYRDSRDPLWKGPAKLLWKGEGAVVIQDNSDIKVVPRRKAKIIRD) form a DNA-binding region, integrase-type.

In terms of assembly, homotrimer; further assembles as hexamers of trimers. Interacts with gp41 (via C-terminus). Interacts with host CALM1; this interaction induces a conformational change in the Matrix protein, triggering exposure of the myristate group. Interacts with host AP3D1; this interaction allows the polyprotein trafficking to multivesicular bodies during virus assembly. Part of the pre-integration complex (PIC) which is composed of viral genome, matrix protein, Vpr and integrase. As to quaternary structure, homodimer; the homodimer further multimerizes as homohexamers or homopentamers. Interacts with human PPIA/CYPA; This interaction stabilizes the capsid. Interacts with human NUP153. Interacts with host PDZD8; this interaction stabilizes the capsid. Interacts with monkey TRIM5; this interaction destabilizes the capsid. Homodimer, whose active site consists of two apposed aspartic acid residues. In terms of assembly, heterodimer of p66 RT and p51 RT (RT p66/p51). Heterodimerization of RT is essential for DNA polymerase activity. The overall folding of the subdomains is similar in p66 RT and p51 RT but the spatial arrangements of the subdomains are dramatically different. As to quaternary structure, homotetramer; may further associate as a homohexadecamer. Part of the pre-integration complex (PIC) which is composed of viral genome, matrix protein, Vpr and integrase. Interacts with human SMARCB1/INI1 and human PSIP1/LEDGF isoform 1. Interacts with human KPNA3; this interaction might play a role in nuclear import of the pre-integration complex. Interacts with human NUP153; this interaction might play a role in nuclear import of the pre-integration complex. Mg(2+) serves as cofactor. Specific enzymatic cleavages by the viral protease yield mature proteins. The protease is released by autocatalytic cleavage. The polyprotein is cleaved during and after budding, this process is termed maturation. Proteolytic cleavage of p66 RT removes the RNase H domain to yield the p51 RT subunit. Nucleocapsid protein p7 might be further cleaved after virus entry. Post-translationally, tyrosine phosphorylated presumably in the virion by a host kinase. Phosphorylation is apparently not a major regulator of membrane association. In terms of processing, phosphorylated possibly by host MAPK1; this phosphorylation is necessary for Pin1-mediated virion uncoating. Methylated by host PRMT6, impairing its function by reducing RNA annealing and the initiation of reverse transcription.

It is found in the host cell membrane. Its subcellular location is the host endosome. It localises to the host multivesicular body. The protein localises to the virion membrane. The protein resides in the host nucleus. It is found in the host cytoplasm. Its subcellular location is the virion. It catalyses the reaction Specific for a P1 residue that is hydrophobic, and P1' variable, but often Pro.. The catalysed reaction is Endohydrolysis of RNA in RNA/DNA hybrids. Three different cleavage modes: 1. sequence-specific internal cleavage of RNA. Human immunodeficiency virus type 1 and Moloney murine leukemia virus enzymes prefer to cleave the RNA strand one nucleotide away from the RNA-DNA junction. 2. RNA 5'-end directed cleavage 13-19 nucleotides from the RNA end. 3. DNA 3'-end directed cleavage 15-20 nucleotides away from the primer terminus.. The enzyme catalyses 3'-end directed exonucleolytic cleavage of viral RNA-DNA hybrid.. It carries out the reaction DNA(n) + a 2'-deoxyribonucleoside 5'-triphosphate = DNA(n+1) + diphosphate. With respect to regulation, protease: The viral protease is inhibited by many synthetic protease inhibitors (PIs), such as amprenavir, atazanavir, indinavir, loprinavir, nelfinavir, ritonavir and saquinavir. Use of protease inhibitors in tritherapy regimens permit more ambitious therapeutic strategies. Reverse transcriptase/ribonuclease H: RT can be inhibited either by nucleoside RT inhibitors (NRTIs) or by non nucleoside RT inhibitors (NNRTIs). NRTIs act as chain terminators, whereas NNRTIs inhibit DNA polymerization by binding a small hydrophobic pocket near the RT active site and inducing an allosteric change in this region. Classical NRTIs are abacavir, adefovir (PMEA), didanosine (ddI), lamivudine (3TC), stavudine (d4T), tenofovir (PMPA), zalcitabine (ddC), and zidovudine (AZT). Classical NNRTIs are atevirdine (BHAP U-87201E), delavirdine, efavirenz (DMP-266), emivirine (I-EBU), and nevirapine (BI-RG-587). The tritherapies used as a basic effective treatment of AIDS associate two NRTIs and one NNRTI. Mediates, with Gag polyprotein, the essential events in virion assembly, including binding the plasma membrane, making the protein-protein interactions necessary to create spherical particles, recruiting the viral Env proteins, and packaging the genomic RNA via direct interactions with the RNA packaging sequence (Psi). Gag-Pol polyprotein may regulate its own translation, by the binding genomic RNA in the 5'-UTR. At low concentration, the polyprotein would promote translation, whereas at high concentration, the polyprotein would encapsidate genomic RNA and then shut off translation. Its function is as follows. Targets the polyprotein to the plasma membrane via a multipartite membrane-binding signal, that includes its myristoylated N-terminus. Matrix protein is part of the pre-integration complex. Implicated in the release from host cell mediated by Vpu. Binds to RNA. In terms of biological role, forms the conical core that encapsulates the genomic RNA-nucleocapsid complex in the virion. Most core are conical, with only 7% tubular. The core is constituted by capsid protein hexamer subunits. The core is disassembled soon after virion entry. Host restriction factors such as TRIM5-alpha or TRIMCyp bind retroviral capsids and cause premature capsid disassembly, leading to blocks in reverse transcription. Capsid restriction by TRIM5 is one of the factors which restricts HIV-1 to the human species. Host PIN1 apparently facilitates the virion uncoating. On the other hand, interactions with PDZD8 or CYPA stabilize the capsid. Functionally, encapsulates and protects viral dimeric unspliced genomic RNA (gRNA). Binds these RNAs through its zinc fingers. Acts as a nucleic acid chaperone which is involved in rearangement of nucleic acid secondary structure during gRNA retrotranscription. Also facilitates template switch leading to recombination. As part of the polyprotein, participates in gRNA dimerization, packaging, tRNA incorporation and virion assembly. Aspartyl protease that mediates proteolytic cleavages of Gag and Gag-Pol polyproteins during or shortly after the release of the virion from the plasma membrane. Cleavages take place as an ordered, step-wise cascade to yield mature proteins. This process is called maturation. Displays maximal activity during the budding process just prior to particle release from the cell. Also cleaves Nef and Vif, probably concomitantly with viral structural proteins on maturation of virus particles. Hydrolyzes host EIF4GI and PABP1 in order to shut off the capped cellular mRNA translation. The resulting inhibition of cellular protein synthesis serves to ensure maximal viral gene expression and to evade host immune response. Also mediates cleavage of host YTHDF3. Mediates cleavage of host CARD8, thereby activating the CARD8 inflammasome, leading to the clearance of latent HIV-1 in patient CD4(+) T-cells after viral reactivation; in contrast, HIV-1 can evade CARD8-sensing when its protease remains inactive in infected cells prior to viral budding. Its function is as follows. Multifunctional enzyme that converts the viral RNA genome into dsDNA in the cytoplasm, shortly after virus entry into the cell. This enzyme displays a DNA polymerase activity that can copy either DNA or RNA templates, and a ribonuclease H (RNase H) activity that cleaves the RNA strand of RNA-DNA heteroduplexes in a partially processive 3' to 5' endonucleasic mode. Conversion of viral genomic RNA into dsDNA requires many steps. A tRNA(3)-Lys binds to the primer-binding site (PBS) situated at the 5'-end of the viral RNA. RT uses the 3' end of the tRNA primer to perform a short round of RNA-dependent minus-strand DNA synthesis. The reading proceeds through the U5 region and ends after the repeated (R) region which is present at both ends of viral RNA. The portion of the RNA-DNA heteroduplex is digested by the RNase H, resulting in a ssDNA product attached to the tRNA primer. This ssDNA/tRNA hybridizes with the identical R region situated at the 3' end of viral RNA. This template exchange, known as minus-strand DNA strong stop transfer, can be either intra- or intermolecular. RT uses the 3' end of this newly synthesized short ssDNA to perform the RNA-dependent minus-strand DNA synthesis of the whole template. RNase H digests the RNA template except for two polypurine tracts (PPTs) situated at the 5'-end and near the center of the genome. It is not clear if both polymerase and RNase H activities are simultaneous. RNase H probably can proceed both in a polymerase-dependent (RNA cut into small fragments by the same RT performing DNA synthesis) and a polymerase-independent mode (cleavage of remaining RNA fragments by free RTs). Secondly, RT performs DNA-directed plus-strand DNA synthesis using the PPTs that have not been removed by RNase H as primers. PPTs and tRNA primers are then removed by RNase H. The 3' and 5' ssDNA PBS regions hybridize to form a circular dsDNA intermediate. Strand displacement synthesis by RT to the PBS and PPT ends produces a blunt ended, linear dsDNA copy of the viral genome that includes long terminal repeats (LTRs) at both ends. In terms of biological role, catalyzes viral DNA integration into the host chromosome, by performing a series of DNA cutting and joining reactions. This enzyme activity takes place after virion entry into a cell and reverse transcription of the RNA genome in dsDNA. The first step in the integration process is 3' processing. This step requires a complex comprising the viral genome, matrix protein, Vpr and integrase. This complex is called the pre-integration complex (PIC). The integrase protein removes 2 nucleotides from each 3' end of the viral DNA, leaving recessed CA OH's at the 3' ends. In the second step, the PIC enters cell nucleus. This process is mediated through integrase and Vpr proteins, and allows the virus to infect a non dividing cell. This ability to enter the nucleus is specific of lentiviruses, other retroviruses cannot and rely on cell division to access cell chromosomes. In the third step, termed strand transfer, the integrase protein joins the previously processed 3' ends to the 5' ends of strands of target cellular DNA at the site of integration. The 5'-ends are produced by integrase-catalyzed staggered cuts, 5 bp apart. A Y-shaped, gapped, recombination intermediate results, with the 5'-ends of the viral DNA strands and the 3' ends of target DNA strands remaining unjoined, flanking a gap of 5 bp. The last step is viral DNA integration into host chromosome. This involves host DNA repair synthesis in which the 5 bp gaps between the unjoined strands are filled in and then ligated. Since this process occurs at both cuts flanking the HIV genome, a 5 bp duplication of host DNA is produced at the ends of HIV-1 integration. Alternatively, Integrase may catalyze the excision of viral DNA just after strand transfer, this is termed disintegration. In Homo sapiens (Human), this protein is Gag-Pol polyprotein (gag-pol).